We begin with the raw amino-acid sequence, 375 residues long: Chaperone protein DnaJ (375 aa).

Residues 5–70 enclose the J domain; the sequence is DYYELLGISR…EKRAAYDQYG (66 aa). The CR-type zinc finger occupies 132–210; the sequence is GTTKDIKIHT…CHGDGRVNKA (79 aa). Residues Cys-145, Cys-148, Cys-162, Cys-165, Cys-184, Cys-187, Cys-198, and Cys-201 each coordinate Zn(2+). CXXCXGXG motif repeat units lie at residues 145 to 152, 162 to 169, 184 to 191, and 198 to 205; these read CDTCHGTG, CPHCHGAG, CHFCHGTG, and CKTCHGDG.

Belongs to the DnaJ family. As to quaternary structure, homodimer. Zn(2+) is required as a cofactor.

It is found in the cytoplasm. Participates actively in the response to hyperosmotic and heat shock by preventing the aggregation of stress-denatured proteins and by disaggregating proteins, also in an autonomous, DnaK-independent fashion. Unfolded proteins bind initially to DnaJ; upon interaction with the DnaJ-bound protein, DnaK hydrolyzes its bound ATP, resulting in the formation of a stable complex. GrpE releases ADP from DnaK; ATP binding to DnaK triggers the release of the substrate protein, thus completing the reaction cycle. Several rounds of ATP-dependent interactions between DnaJ, DnaK and GrpE are required for fully efficient folding. Also involved, together with DnaK and GrpE, in the DNA replication of plasmids through activation of initiation proteins. This chain is Chaperone protein DnaJ, found in Aggregatibacter actinomycetemcomitans (Actinobacillus actinomycetemcomitans).